We begin with the raw amino-acid sequence, 338 residues long: Lipoate-protein ligase A (338 aa).

The BPL/LPL catalytic domain maps to 29–216 (PATQRVLFLW…AFFAHYGEHV (188 aa)). Residues Arg71, 76–79 (GAVF), and Lys134 contribute to the ATP site. Lys134 is a (R)-lipoate binding site.

It belongs to the LplA family. As to quaternary structure, monomer.

The protein localises to the cytoplasm. The enzyme catalyses L-lysyl-[lipoyl-carrier protein] + (R)-lipoate + ATP = N(6)-[(R)-lipoyl]-L-lysyl-[lipoyl-carrier protein] + AMP + diphosphate + H(+). It participates in protein modification; protein lipoylation via exogenous pathway; protein N(6)-(lipoyl)lysine from lipoate: step 1/2. The protein operates within protein modification; protein lipoylation via exogenous pathway; protein N(6)-(lipoyl)lysine from lipoate: step 2/2. Catalyzes both the ATP-dependent activation of exogenously supplied lipoate to lipoyl-AMP and the transfer of the activated lipoyl onto the lipoyl domains of lipoate-dependent enzymes. In Escherichia coli O17:K52:H18 (strain UMN026 / ExPEC), this protein is Lipoate-protein ligase A.